A 638-amino-acid polypeptide reads, in one-letter code: MAAEVQMVLYEDDSVQVQYIDGSRLQLSPCGSEFLFEKAPPVSAHPLQQPERIRQRTHFVISAYREQLQRALDFRNSFATCPFLSESIIPSEMKTRILIDVSEVRWPSLDTGDGMTYMQSGTVRISSLDGHAYLCLPKSQHEFTVHFLCKVSQKPDSSIEVSEKNNKGKKDKQVEKAGKICTRGSLSGQRLKNKENELYHQIMKSEEPSEKSCVNGAKGREVLSSPHPKDTCIYTWVKQCWSVASCPEEWKYPLSLALHFHDKISSMSGIDADITQKRMLTSDVSEERGKEVSVLPRALLLSCPAPHLHRWNFSDSLSQKQFGEEEYSYHELVKVVWYKGVTYRLTHKHMNSIEIYPGDGSVFKSEGAYLGNYFTYYSIREESEEREEKTYAVNNLPPDRPGSPFSVCSLIKQATRILQHCAKMRLSLSHNYRVCCWKMVPGINDSSVLPLLLRESFVPGVGRFLAYSDDKVHAIFLDGITLTLNWNFGSFIEKRQVNRGLTLGWCKLTFPDGQNQLIQIQHPRPYERYVTTVISWCRRLTQISQQEIPIHPSSSVPEESWSVASELEKIQKFNLLLESSGVLNQTSNKKNKQSLDRCKPKSSETLLKEVNEKSVSVALKKTSEILQDIDNLLSNSKW.

This is an uncharacterized protein from Bos taurus (Bovine).